The sequence spans 125 residues: Putative zinc finger A20 and AN1 domain-containing stress-associated protein 8 (125 aa).

Residues 2–36 (TGEPSLCIRGCGFFSTSQTKNLCSKCYNDFLKDES) form an A20-type zinc finger. Residues Cys-8, Cys-12, Cys-24, Cys-27, Cys-80, Cys-82, His-96, and Cys-98 each contribute to the Zn(2+) site. The segment at 61 to 106 (LGSKGGCACKKKVGLLGFHCRCGHLFFASHRYPEEHSCPSDYKSAA) adopts an AN1-type; degenerate zinc-finger fold.

In terms of biological role, may be involved in environmental stress response. The protein is Putative zinc finger A20 and AN1 domain-containing stress-associated protein 8 (SAP8) of Arabidopsis thaliana (Mouse-ear cress).